A 275-amino-acid polypeptide reads, in one-letter code: ATP synthase subunit delta (275 aa).

Belongs to the ATPase delta chain family. F-type ATPases have 2 components, F(1) - the catalytic core - and F(0) - the membrane proton channel. F(1) has five subunits: alpha(3), beta(3), gamma(1), delta(1), epsilon(1). F(0) has three main subunits: a(1), b(2) and c(10-14). The alpha and beta chains form an alternating ring which encloses part of the gamma chain. F(1) is attached to F(0) by a central stalk formed by the gamma and epsilon chains, while a peripheral stalk is formed by the delta and b chains.

The protein resides in the cell membrane. F(1)F(0) ATP synthase produces ATP from ADP in the presence of a proton or sodium gradient. F-type ATPases consist of two structural domains, F(1) containing the extramembraneous catalytic core and F(0) containing the membrane proton channel, linked together by a central stalk and a peripheral stalk. During catalysis, ATP synthesis in the catalytic domain of F(1) is coupled via a rotary mechanism of the central stalk subunits to proton translocation. Functionally, this protein is part of the stalk that links CF(0) to CF(1). It either transmits conformational changes from CF(0) to CF(1) or is implicated in proton conduction. The polypeptide is ATP synthase subunit delta (Pseudarthrobacter chlorophenolicus (strain ATCC 700700 / DSM 12829 / CIP 107037 / JCM 12360 / KCTC 9906 / NCIMB 13794 / A6) (Arthrobacter chlorophenolicus)).